The chain runs to 83 residues: RNA-binding protein Hfq (83 aa).

The region spanning 10-70 (DAFLNQLRKE…ISTVSPSRPV (61 aa)) is the Sm domain.

This sequence belongs to the Hfq family. In terms of assembly, homohexamer.

Functionally, RNA chaperone that binds small regulatory RNA (sRNAs) and mRNAs to facilitate mRNA translational regulation in response to envelope stress, environmental stress and changes in metabolite concentrations. Also binds with high specificity to tRNAs. This Desulforudis audaxviator (strain MP104C) protein is RNA-binding protein Hfq.